Here is a 657-residue protein sequence, read N- to C-terminus: Outer dense fiber protein 2 (657 aa).

Residues serine 73 and serine 74 each carry the phosphoserine modification. The residue at position 92 (threonine 92) is a Phosphothreonine. Serine 95 is subject to Phosphoserine; by TSSK4. 2 positions are modified to phosphoserine: serine 106 and serine 109. A Phosphothreonine modification is found at threonine 110. Serine 115 and serine 129 each carry phosphoserine. Lysine 138 is covalently cross-linked (Glycyl lysine isopeptide (Lys-Gly) (interchain with G-Cter in SUMO2)). Serine 139 carries the post-translational modification Phosphoserine. 2 coiled-coil regions span residues 144–423 (QKGE…AEQL) and 461–635 (EIIV…SDLR). Residue threonine 231 is modified to Phosphothreonine. Phosphoserine occurs at positions 261 and 632.

The protein belongs to the ODF2 family. Self-associates. Associates with microtubules and forms a fibrillar structure partially linked to the microtubule network. Interacts via its C-terminus with PLK1. Interacts with ODF1. Interacts with MARK4; the interaction is required for localization of ODF2 to centrioles. Interacts with TSSK4. Interacts with AKNA. Interacts with CFAP58. Interacts with BBOF1. Interacts with CCDC38. Interacts with CCDC42. Tyrosine phosphorylated. Phosphorylated on Ser-95 by TSSK4.

The protein resides in the cytoplasm. Its subcellular location is the cytoskeleton. The protein localises to the microtubule organizing center. It localises to the centrosome. It is found in the cell projection. The protein resides in the cilium. Its subcellular location is the centriole. The protein localises to the spindle pole. It localises to the flagellum. Functionally, seems to be a major component of sperm tail outer dense fibers (ODF). ODFs are filamentous structures located on the outside of the axoneme in the midpiece and principal piece of the mammalian sperm tail and may help to maintain the passive elastic structures and elastic recoil of the sperm tail. May have a modulating influence on sperm motility. Functions as a general scaffold protein that is specifically localized at the distal/subdistal appendages of mother centrioles. Component of the centrosome matrix required for the localization of PLK1 and NIN to the centrosomes. Required for the formation and/or maintenance of normal CETN1 assembly. This chain is Outer dense fiber protein 2 (ODF2), found in Bos taurus (Bovine).